The following is a 378-amino-acid chain: Succinyl-diaminopimelate desuccinylase (378 aa).

His68 serves as a coordination point for Zn(2+). Residue Asp70 is part of the active site. Residue Asp101 participates in Zn(2+) binding. The active-site Proton acceptor is the Glu135. Zn(2+)-binding residues include Glu136, Glu164, and His350.

This sequence belongs to the peptidase M20A family. DapE subfamily. As to quaternary structure, homodimer. The cofactor is Zn(2+). Co(2+) is required as a cofactor.

The catalysed reaction is N-succinyl-(2S,6S)-2,6-diaminopimelate + H2O = (2S,6S)-2,6-diaminopimelate + succinate. Its pathway is amino-acid biosynthesis; L-lysine biosynthesis via DAP pathway; LL-2,6-diaminopimelate from (S)-tetrahydrodipicolinate (succinylase route): step 3/3. In terms of biological role, catalyzes the hydrolysis of N-succinyl-L,L-diaminopimelic acid (SDAP), forming succinate and LL-2,6-diaminopimelate (DAP), an intermediate involved in the bacterial biosynthesis of lysine and meso-diaminopimelic acid, an essential component of bacterial cell walls. This is Succinyl-diaminopimelate desuccinylase from Vibrio atlanticus (strain LGP32) (Vibrio splendidus (strain Mel32)).